Reading from the N-terminus, the 387-residue chain is Deoxyguanosinetriphosphate triphosphohydrolase-like protein (387 aa).

Residues 78–209 enclose the HD domain; that stretch reads RLTHSLEVAQ…ANLADEVAYN (132 aa).

This sequence belongs to the dGTPase family. Type 2 subfamily.

This Ralstonia nicotianae (strain ATCC BAA-1114 / GMI1000) (Ralstonia solanacearum) protein is Deoxyguanosinetriphosphate triphosphohydrolase-like protein.